The chain runs to 217 residues: MYDDYLTIALSKGTLLEPTLEVFKKLKLPGEGINDKSRSMVFTYDNERVKYIMCRPTDVPTYVEQGAADLGIVGKDVIVEQARDVFEMVDLQYGYCRFVVAVPEAIKNITLKDLNYKRAATKFPVIAENFFRSQGLQVEIIKLHGNIELAPLMGLADMIVDLVSTGRTLKENRLVELIKIMDSTTRLICNRVSYRTKHQQIQPLIENMQKLSTGGSA.

It belongs to the ATP phosphoribosyltransferase family. Short subfamily. As to quaternary structure, heteromultimer composed of HisG and HisZ subunits.

The protein resides in the cytoplasm. It carries out the reaction 1-(5-phospho-beta-D-ribosyl)-ATP + diphosphate = 5-phospho-alpha-D-ribose 1-diphosphate + ATP. The protein operates within amino-acid biosynthesis; L-histidine biosynthesis; L-histidine from 5-phospho-alpha-D-ribose 1-diphosphate: step 1/9. Functionally, catalyzes the condensation of ATP and 5-phosphoribose 1-diphosphate to form N'-(5'-phosphoribosyl)-ATP (PR-ATP). Has a crucial role in the pathway because the rate of histidine biosynthesis seems to be controlled primarily by regulation of HisG enzymatic activity. In Syntrophomonas wolfei subsp. wolfei (strain DSM 2245B / Goettingen), this protein is ATP phosphoribosyltransferase.